The sequence spans 300 residues: Ribosomal RNA small subunit methyltransferase H (300 aa).

Residues 33-35 (GGH), Asp52, Phe79, Asp100, and Gln107 contribute to the S-adenosyl-L-methionine site.

This sequence belongs to the methyltransferase superfamily. RsmH family.

It is found in the cytoplasm. It catalyses the reaction cytidine(1402) in 16S rRNA + S-adenosyl-L-methionine = N(4)-methylcytidine(1402) in 16S rRNA + S-adenosyl-L-homocysteine + H(+). Its function is as follows. Specifically methylates the N4 position of cytidine in position 1402 (C1402) of 16S rRNA. The protein is Ribosomal RNA small subunit methyltransferase H of Mycoplasmopsis agalactiae (strain NCTC 10123 / CIP 59.7 / PG2) (Mycoplasma agalactiae).